We begin with the raw amino-acid sequence, 251 residues long: Ubiquinone/menaquinone biosynthesis C-methyltransferase UbiE (251 aa).

S-adenosyl-L-methionine-binding positions include T74, D95, 123 to 124, and S140; that span reads NA.

It belongs to the class I-like SAM-binding methyltransferase superfamily. MenG/UbiE family.

It catalyses the reaction a 2-demethylmenaquinol + S-adenosyl-L-methionine = a menaquinol + S-adenosyl-L-homocysteine + H(+). It carries out the reaction a 2-methoxy-6-(all-trans-polyprenyl)benzene-1,4-diol + S-adenosyl-L-methionine = a 5-methoxy-2-methyl-3-(all-trans-polyprenyl)benzene-1,4-diol + S-adenosyl-L-homocysteine + H(+). The protein operates within quinol/quinone metabolism; menaquinone biosynthesis; menaquinol from 1,4-dihydroxy-2-naphthoate: step 2/2. Its pathway is cofactor biosynthesis; ubiquinone biosynthesis. In terms of biological role, methyltransferase required for the conversion of demethylmenaquinol (DMKH2) to menaquinol (MKH2) and the conversion of 2-polyprenyl-6-methoxy-1,4-benzoquinol (DDMQH2) to 2-polyprenyl-3-methyl-6-methoxy-1,4-benzoquinol (DMQH2). The sequence is that of Ubiquinone/menaquinone biosynthesis C-methyltransferase UbiE from Pectobacterium carotovorum subsp. carotovorum (strain PC1).